We begin with the raw amino-acid sequence, 2333 residues long: MNTTDCFIALVHAIREIRAFFLPRATGRMEFTLHNGERKVFYSRPNNHDNCWLNTILQLFRYVGEPFFDWVYDSPENLTLEAIEQLEELTGLELHEGGPPALVIWNIKHLLHTGIGTASRPSEVCMVDGTNMCLADFHAGIFLKGQEHAVFACVTSNGWYAIDDEDFYPWTPDPSDVLVFVPYDQEPLNGEWKTKVQQKLKGAGQSSPATGSQNQSGNTGSIINNYYMQQYQNSMDTQLGDNAISGGSNEGSTDTTSTHTTNTQNNDWFSKLASSAFTGLFGALLADKKTEETTLLEDRILTTRNGHTTSTTQSSVGVTHGYSTEEDHVAGPNTSGLETRVVQAERFYKKYLFDWTTDKAFGHLEKLELPSDHHGVFGHLVDSYAYMRNGWDVEVSAVGNQFNGGCLLVAMVPEWKEFDTREKYQLTLFPHQFISPRTNMTAHITVPYLGVNRYDQYKKHKPWTLVVMVVSPLTVNNTSAAQIKVYANIAPTYVHVAGELPSKEGIFPVACADGYGGLVTTDPKTADPAYGKVYNPPRTNYPGRFTNLLDVAEACPTFLCFDDGKPYVTTRTDDTRLLAKFDLSLAAKHMSNTYLSGIAQYYTQYSGTINLHFMFTGSTDSKARYMVAYIPPGVETPPDTPERAAHCIHAEWDTGLNSKFTFSIPYVSAADYAYTASDTAETINVQGWVCIYQITHGKAENDTLVVSVSAGKDFELRLPIDPRQQTTATGESADPVTTTVENYGGETQIQRRHHTDIGFIMDRFVKIQSLSPTHVIDLMQTHQHGLVGALLRAATYYFSDLEIVVRHEGNLTWVPNGAPESALLNTSNPTAYNKAPFTRLALPYTAPHRVLATVYNGTSKYAVGGSGRRGDMGSLAARVVKQLPASFNYGAIKADAIHELLVRMKRAELYCPRPLLAIEVSSQDRHKQKIIAPAKQLLNFDLLKLAGDVESNPGPFFFSDVRSNFSKLVDTINQMQEDMSTKHGPDFNRLVSAFEELATGVKAIRTGLDEAKPWYKLIKLLSRLSCMAAVAARSKDPVLVAIMLADTGLEILDSTFVVKKISDSLSSLFHVPAPVFSFGAPILLAGLVKVASSFFRSTPEDLERAEKQLKARDINDIFAILKNGEWLVKLILAIRDWIKAWIASEEKFVTTTDLVPGILEKQRDLNDPSKYKEAKEWLDNARQACLKSGNVHIANLCKVVAPAPSRSRPEPVVVCLRGKSGQGKSFLANVLAQAISTHFTGRTDSVWYCPPDPDHFDGYNQQTVVVMDDLGQNPDGKDFKYFAQMVSTTGFIPPMASLEDKGKPFNSKVIIATTNLYSGFTPRTMVCPDALNRRFHFDIDVSAKDGYKINNKLDIIKALEDTHTNPVAMFQYDCALLNGMAVEMKRMQQDMFKPQPPLQNVYQLVQEVIERVELHEKVSSHPIFKQISIPSQKSVLYFLIEKGQHEAAIEFFEGMVHDSIKEELRPLIQQTSFVKRAFKRLKENFEIVALCLTLLANIVIMIRETRKRQKMVDDAVSEYIERANITTDDKTLDEAEKNPLETSGASTVGFRERPLPGQKARNDENSEPAQPAEEQPQAEGPYAGPLERQKPLKVRAKLPQQEGPYAGPMERQKPLKVKAKAPVVKEGPYEGPVKKPVALKVKAKNLIVTESGAPPTDLQKLVMGNTKPVELILDGKTVAICCATGVFGTAYLVPRHLFAEKYDKIMLDGRAMTDSDYRVFEFEIKVKGQDMLSDAALMVLHRGNRVRDITKHFRDTARMKKGTPVVGVINNADVGRLIFSGEALTYKDIVVCMDGDTMPGLFAYKAATKAGYCGGAVLAKDGADTFIVGTHSAGGNGVGYCSCVSRSMLLKMKAHVDPEPHHEGLIVDTRDVEERVHVMRKTKLAPTVAHGVFNPEFGPAALSNKDPRLNDGVVLDEVIFSKHKGDTKMSEEDKALFRRCAADYASRLHSVLGTANAPLSIYEAIKGVDGLDAMEPDTAPGLPWALQGKRRGALIDFENGTVGPEVEAALKLMEKREYKFACQTFLKDEIRPMEKVRAGKTRIVDVLPVEHILYTRMMIGRFCAQMHSNNGPQIGSAVGCNPDVDWQRFGTHFAQYRNVWDVDYSAFDANHCSDAMNIMFEEVFRTEFGFHPNAEWILKTLVNTEHAYENKRITVEGGMPSGCSATSIINTILNNIYVLYALRRHYEGVELDTYTMISYGDDIVVASDYDLDFEALKPHFKSLGQTITPADKSDKGFVLGHSITDVTFLKRHFHMDYGTGFYKPVMASKTLEAILSFARRGTIQEKLISVAGLAVHSGPDEYRRLFEPFQGLFEIPSYRSLYLRWVNAVCGDA.

The Peptidase C28 domain maps to 1–201; the sequence is MNTTDCFIAL…WKTKVQQKLK (201 aa). Residues 1–1481 are Cytoplasmic-facing; that stretch reads MNTTDCFIAL…SFVKRAFKRL (1481 aa). Catalysis depends on for leader protease activity residues Cys51, His148, and Asp163. 2 disordered regions span residues 197 to 218 and 238 to 265; these read QQKL…QSGN and QLGD…NTQN. Gly202 is lipidated: N-myristoyl glycine; by host. 2 stretches are compositionally biased toward polar residues: residues 204 to 218 and 238 to 251; these read GQSS…QSGN and QLGD…SNEG. Positions 252-265 are enriched in low complexity; that stretch reads STDTTSTHTTNTQN. The tract at residues 789-797 is antigenic epitope; sequence ALLRAATYY. The Cell attachment site motif lies at 869 to 871; the sequence is RGD. The 165-residue stretch at 1190 to 1354 folds into the SF3 helicase domain; the sequence is NVHIANLCKV…DGYKINNKLD (165 aa). 1218 to 1225 provides a ligand contact to ATP; the sequence is GKSGQGKS. An intramembrane segment occupies 1482-1502; sequence KENFEIVALCLTLLANIVIMI. Over 1503–2333 the chain is Cytoplasmic; it reads RETRKRQKMV…RWVNAVCGDA (831 aa). Basic and acidic residues-rich tracts occupy residues 1530-1539 and 1550-1564; these read KTLDEAEKNP and FRER…RNDE. Residues 1530–1585 form a disordered region; sequence KTLDEAEKNPLETSGASTVGFRERPLPGQKARNDENSEPAQPAEEQPQAEGPYAGP. A compositionally biased stretch (low complexity) spans 1567-1579; the sequence is EPAQPAEEQPQAE. 3 positions are modified to O-(5'-phospho-RNA)-tyrosine: Tyr1582, Tyr1605, and Tyr1629. In terms of domain architecture, Peptidase C3 spans 1653-1849; that stretch reads APPTDLQKLV…YCSCVSRSML (197 aa). His1696 functions as the For protease 3C activity; Proton donor/acceptor in the catalytic mechanism. Catalysis depends on for protease 3C activity residues Asp1734 and Cys1813. The Nuclear localization signal signature appears at 1879 to 1887; it reads MRKTKLAPT. Positions 2097–2215 constitute a RdRp catalytic domain; that stretch reads RNVWDVDYSA…ASDYDLDFEA (119 aa). Asp2201 functions as the For RdRp activity in the catalytic mechanism.

This sequence belongs to the picornaviruses polyprotein family. As to quaternary structure, interacts with host ISG15. In terms of assembly, interacts (via R-G-D motif) with host ITGAV/ITGB6. Interacts with host MAVS; this interaction inhibits binding of host TRAF3 to MAVS, thereby suppressing interferon-mediated responses. Forms homooligomers. As to quaternary structure, homohexamer. Interacts with host VIM. Interacts with host BECN1. In terms of assembly, interacts with host DCTN3. Interacts with RNA-dependent RNA polymerase; this interaction allows 3B-1 to binds 2 polymerases and act as a primer. It also allows the recruitment of the RNA-dependent RNA polymerase to host membranes. As to quaternary structure, interacts with RNA-dependent RNA polymerase; this interaction allows 3B-2 to act as a primer. In terms of assembly, interacts with RNA-dependent RNA polymerase; this interaction allows 3B-3 to act as a primer. Interacts with 3B-1; this interaction allows 3B-1 to binds 2 polymerases and act as a primer. It also allows the recruitment of the RNA-dependent RNA polymerase to host membranes. Interacts with 3B-2; this interaction allows 3B-2 to act as a primer. Interacts with 3B-3; this interaction allows 3B-3 to act as a primer. Removes six residues from its own C-terminus, generating sLb(pro). Post-translationally, specific enzymatic cleavages in vivo by the viral proteases yield a variety of precursors and mature proteins. The polyprotein seems to be cotranslationally cleaved at the 2A/2B junction by a ribosomal skip from one codon to the next without formation of a peptide bond. This process would release the L-P1-2A peptide from the translational complex. In terms of processing, during virion maturation, immature virions are rendered infectious following cleavage of VP0 into VP4 and VP2. This maturation seems to be an autocatalytic event triggered by the presence of RNA in the capsid and is followed by a conformational change of the particle. Myristoylation is required during RNA encapsidation and formation of the mature virus particle. Post-translationally, uridylylated by the polymerase and covalently linked to the 5'-end of genomic RNA. These uridylylated forms act as a nucleotide-peptide primer for the polymerase.

It is found in the host nucleus. The protein localises to the host cytoplasm. It localises to the virion. Its subcellular location is the host endoplasmic reticulum membrane. The protein resides in the host cytoplasmic vesicle membrane. The enzyme catalyses Autocatalytically cleaves itself from the polyprotein of the foot-and-mouth disease virus by hydrolysis of a Lys-|-Gly bond, but then cleaves host cell initiation factor eIF-4G at bonds -Gly-|-Arg- and -Lys-|-Arg-.. It catalyses the reaction a ribonucleoside 5'-triphosphate + H2O = a ribonucleoside 5'-diphosphate + phosphate + H(+). The catalysed reaction is RNA(n) + a ribonucleoside 5'-triphosphate = RNA(n+1) + diphosphate. It carries out the reaction Selective cleavage of Gln-|-Gly bond in the poliovirus polyprotein. In other picornavirus reactions Glu may be substituted for Gln, and Ser or Thr for Gly.. In terms of biological role, autocatalytically cleaves itself from the polyprotein at the L/VP0 junction. Also cleaves the host translation initiation factors EIF4G1 and EIF4G3, in order to shut off the capped cellular mRNA transcription. Plays a role in counteracting host innate antiviral response using diverse mechanisms. Possesses a deubiquitinase activity acting on both 'Lys-48' and 'Lys-63'-linked polyubiquitin chains. In turn, inhibits the ubiquitination and subsequent activation of key signaling molecules of type I IFN response such as host RIGI, TBK1, TRAF3 and TRAF6. Inhibits host NF-kappa-B activity by inducing a decrease in RELA mRNA levels. Cleaves a peptide bond in the C-terminus of host ISG15, resulting in the damaging of this modifier that can no longer be attached to target proteins. Also cleaves host G3BP1 and G3BP2 in order to inhibit cytoplasmic stress granules assembly. Its function is as follows. Lies on the inner surface of the capsid shell. After binding to the host receptor, the capsid undergoes conformational changes. Capsid protein VP4 is released, capsid protein VP1 N-terminus is externalized, and together, they shape a pore in the host membrane through which the viral genome is translocated into the host cell cytoplasm. After genome has been released, the channel shrinks. Forms an icosahedral capsid of pseudo T=3 symmetry with capsid proteins VP1 and VP3. The capsid is composed of 60 copies of each capsid protein organized in the form of twelve pentamers and encloses the viral positive strand RNA genome. Upon acidifcation in the endosome, dissociates into pentamers. Functionally, forms an icosahedral capsid of pseudo T=3 symmetry with capsid proteins VP0 and VP3. The capsid is composed of 60 copies of each capsid protein organized in the form of twelve pentamers and encloses the viral positive strand RNA genome. Upon acidifcation in the endosome, dissociates into pentamers. In terms of biological role, forms an icosahedral capsid of pseudo T=3 symmetry with capsid proteins VP2 and VP3. The capsid is composed of 60 copies of each capsid protein organized in the form of twelve pentamers and encloses the viral positive strand RNA genome. Mediates cell entry by attachment to an integrin receptor, usually host ITGAV/ITGB6. In addition, targets host MAVS to suppress type I IFN pathway. Upon acidifcation in the endosome, dissociates into pentamers. Its function is as follows. Mediates self-processing of the polyprotein by a translational effect termed 'ribosome skipping'. Mechanistically, 2A-mediated cleavage occurs between the C-terminal glycine and the proline of the downstream protein 2B. In the case of foot-and-mouth disease virus, the 2A oligopeptide is post-translationally 'trimmed' from the C-terminus of the upstream protein 1D by 3C proteinase. Plays an essential role in the virus replication cycle by acting as a viroporin. Creates a pore in the host endoplasmic reticulum and as a consequence releases Ca2+ in the cytoplasm of infected cell. In turn, high levels of cytoplasmic calcium may trigger membrane trafficking and transport of viral ER-associated proteins to viroplasms, sites of viral genome replication. Functionally, associates with and induces structural rearrangements of intracellular membranes. Triggers host autophagy by interacting with host BECN1 and thereby promotes viral replication. Participates in viral replication and interacts with host DHX9. Displays RNA-binding, nucleotide binding and NTPase activities. May play a role in virion morphogenesis and viral RNA encapsidation by interacting with the capsid protein VP3. In terms of biological role, plays important roles in virus replication, virulence and host range. Cooperates with host DDX56 to inhibit IRF3 nuclear translocation and subsequent type I interferon production. Its function is as follows. Covalently linked to the 5'-end of both the positive-strand and negative-strand genomic RNAs. Acts as a genome-linked replication primer. Cysteine protease that generates mature viral proteins from the precursor polyprotein. In addition to its proteolytic activity, binds to viral RNA and thus influences viral genome replication. RNA and substrate bind cooperatively to the protease. Functionally, RNA-directed RNA polymerase 3D-POL replicates genomic and antigenomic RNA by recognizing replications specific signals. Covalently attaches UMP to a tyrosine of VPg, which is used to prime RNA synthesis. The positive stranded RNA genome is first replicated at virus induced membranous vesicles, creating a dsRNA genomic replication form. This dsRNA is then used as template to synthesize positive stranded RNA genomes. ss(+)RNA genomes are either translated, replicated or encapsidated. The sequence is that of Genome polyprotein from Bos taurus (Bovine).